A 255-amino-acid chain; its full sequence is CD320 antigen (255 aa).

Positions 1 to 29 are cleaved as a signal peptide; sequence MNGWVARGLARRAAALGLGLRVLLCFGLC. Topologically, residues 30-203 are extracellular; that stretch reads LEIAPTPIQT…SVQSGNRNVY (174 aa). 2 consecutive LDL-receptor class A domains span residues 52-89 and 120-157; these read SCPPTNFQCRSDGRCLPLIWRCDVDQDCPDGSDEEECG and SCPEGELCCPLDGVCIPSTWLCDGHRDCSDYSDELGCG. 6 cysteine pairs are disulfide-bonded: Cys53-Cys66, Cys60-Cys79, Cys73-Cys88, Cys121-Cys134, Cys128-Cys147, and Cys141-Cys156. Ca(2+)-binding residues include Trp71, Asp74, Asp76, Asp78, Asp84, and Glu85. Positions 139, 142, 144, 146, 152, and 153 each coordinate Ca(2+). Asn177 and Asn183 each carry an N-linked (GlcNAc...) asparagine glycan. The helical transmembrane segment at 204–224 threads the bilayer; the sequence is GIIAAVAVLSISLAAGILFAL. Residues 225–255 are Cytoplasmic-facing; sequence SRLCAQGCLAPLGLLVSMKGSLQPEKKTSVL.

In terms of assembly, interacts (via LDL-receptor class A domains) with TCN2.

Its subcellular location is the cell membrane. Functionally, receptor for transcobalamin saturated with cobalamin (TCbl). Plays an important role in cobalamin uptake. Plasma membrane protein that is expressed on follicular dendritic cells (FDC) and mediates interaction with germinal center B cells. Functions as a costimulator to promote B cell responses to antigenic stimuli; promotes B cell differentiation and proliferation. Germinal center-B (GC-B) cells differentiate into memory B-cells and plasma cells (PC) through interaction with T-cells and follicular dendritic cells (FDC). CD320 augments the proliferation of PC precursors generated by IL-10. The protein is CD320 antigen (CD320) of Bos taurus (Bovine).